The primary structure comprises 65 residues: Small ribosomal subunit protein bS21 (65 aa).

The tract at residues 44-65 is disordered; it reads DDRLKRSRGKRRAQRANEERNS. Basic residues predominate over residues 48-57; the sequence is KRSRGKRRAQ.

This sequence belongs to the bacterial ribosomal protein bS21 family.

This is Small ribosomal subunit protein bS21 from Prosthecochloris aestuarii (strain DSM 271 / SK 413).